Here is a 319-residue protein sequence, read N- to C-terminus: Vomeronasal type-1 receptor 51 (319 aa).

Residues 1 to 31 (MNEILFFSPQPLFSHMMNENSRVHTHSNLRH) are Extracellular-facing. A helical transmembrane segment spans residues 32-52 (IFFSEIGIGISGNSFLLLFHI). Topologically, residues 53–65 (LKFIHGHRSRLSD) are cytoplasmic. Residues 66 to 86 (LPIGLLSLIHLLMLLVMAFIA) form a helical membrane-spanning segment. Over 87 to 109 (TDIFISWRGWDDIICKFLVYLYR) the chain is Extracellular. C101 and C188 are oxidised to a cystine. A helical transmembrane segment spans residues 110–130 (VLRGLSLCTTSMLSVLQAIIL). Residues 131–150 (SPRSSCLAKFKRKSLHHISC) are Cytoplasmic-facing. The helical transmembrane segment at 151 to 171 (AILFLSVLYMLIGSQLLVSII) threads the bilayer. Residues 172–203 (ATPNLTTNDFIYVTQSCSILPLSYVMQSMFST) lie on the Extracellular side of the membrane. N-linked (GlcNAc...) asparagine glycosylation occurs at N175. Residues 204-224 (LLVIRDVFLISLMVLSTWYMV) form a helical membrane-spanning segment. Residues 225–254 (ALLCRHRKKTQHLQGISLSPKTSPKQRATQ) are Cytoplasmic-facing. The helical transmembrane segment at 255 to 275 (TLLMLMSFFVLMTIYDTIVSC) threads the bilayer. Residues 276–285 (SRTMFLNDPT) lie on the Extracellular side of the membrane. Residues 286–306 (SYNMQIFVVHIYATVSPFVFM) traverse the membrane as a helical segment. Residues 307–319 (STEKHIVNCLRSV) lie on the Cytoplasmic side of the membrane.

Belongs to the G-protein coupled receptor 1 family. Expressed in a subset of sensory neurons located in the apical layer of the vomeronasal organ.

The protein localises to the cell membrane. Its function is as follows. Putative pheromone receptor implicated in the regulation of social as well as reproductive behavior. The chain is Vomeronasal type-1 receptor 51 (Vmn1r51) from Mus musculus (Mouse).